The primary structure comprises 889 residues: Potassium/sodium hyperpolarization-activated cyclic nucleotide-gated channel 2 (889 aa).

The span at 1-10 shows a compositional bias: gly residues; sequence MDARGGGGRP. The segment at 1–159 is disordered; sequence MDARGGGGRP…GPAGEPRGSQ (159 aa). Residues 1 to 215 lie on the Cytoplasmic side of the membrane; sequence MDARGGGGRP…PYSDFRFYWD (215 aa). The span at 17 to 55 shows a compositional bias: pro residues; sequence TPAPGPPPPPPPAPPQQQPPPPPPPAPPPGPGPAPPQHP. The segment covering 129–155 has biased composition (low complexity); the sequence is GAASGPAPGPGPAEEAGSEEAGPAGEP. 2 positions are modified to phosphoserine: Ser146 and Ser161. The interval 158 to 209 is involved in subunit assembly; that stretch reads SQASFMQRQFGALLQPGVNKFSLRMFGSQKAVEREQERVKSAGAWIIHPYSD. The helical transmembrane segment at 216 to 236 threads the bilayer; it reads FTMLLFMVGNLIIIPVGITFF. Residues 237 to 240 are Extracellular-facing; the sequence is KDET. Residues 241 to 261 form a helical membrane-spanning segment; the sequence is TAPWIVFNVVSDTFFLMDLVL. Over 262-288 the chain is Cytoplasmic; that stretch reads NFRTGIVIEDNTEIILDPEKIKKKYLR. A helical membrane pass occupies residues 289–309; the sequence is TWFVVDFVSSIPVDYIFLIVE. Residues 310–317 are Extracellular-facing; it reads KGIDSEVY. Residues 318-338 form a helical; Voltage-sensor membrane-spanning segment; the sequence is KTARALRIVRFTKILSLLRLL. Over 339 to 369 the chain is Cytoplasmic; sequence RLSRLIRYIHQWEEIFHMTYDLASAVMRICN. The helical transmembrane segment at 370–390 threads the bilayer; that stretch reads LISMMLLLCHWDGCLQFLVPM. Over 391–413 the chain is Extracellular; that stretch reads LQDFPRNCWVSINGMVNHSWSEL. An N-linked (GlcNAc...) asparagine glycan is attached at Asn407. Residues 414 to 435 constitute an intramembrane region (pore-forming); that stretch reads YSFALFKAMSHMLCIGYGRQAP. Residues 436–440 are Extracellular-facing; the sequence is ESMTD. The chain crosses the membrane as a helical span at residues 441–461; that stretch reads IWLTMLSMIVGATCYAMFIGH. At 462 to 889 the chain is on the cytoplasmic side; sequence ATALIQSLDS…SARSRLSSNL (428 aa). Met599, Gly608, Glu609, Ile610, Cys611, Arg618, Thr619, and Arg659 together coordinate 3',5'-cyclic AMP. Residue Ser668 is modified to Phosphoserine; by PKG/PRKG2. At Ser754 the chain carries Phosphoserine. The disordered stretch occupies residues 754 to 889; sequence SPRLVRRPPP…SARSRLSSNL (136 aa). Position 756 is an omega-N-methylarginine (Arg756). The span at 760-784 shows a compositional bias: pro residues; it reads RPPPGPAPAAASPGPPPPASPPGAP. Ser771, Ser779, Ser786, Ser866, and Ser868 each carry phosphoserine. The segment covering 785–860 has biased composition (low complexity); that stretch reads ASPRAPRTSP…TPAARAAAPS (76 aa).

The protein belongs to the potassium channel HCN family. In terms of assembly, homotetramer. The channel is composed of a homo- or heterotetrameric complex of pore-forming subunits. Heterotetramer with HCN1. Forms an obligate 4:4 complex with accessory subunit PEX5L. Interacts with KCNE2. Post-translationally, phosphorylation at Ser-668 by PRKG2 shifts the voltage-dependence to more negative voltages, hence counteracting the stimulatory effect of cGMP on gating. S-palmitoylated. In terms of processing, N-glycosylated; required for cell surface trafficking of HCN2. As to expression, highly expressed throughout the brain. Detected at low levels in heart.

Its subcellular location is the cell membrane. The catalysed reaction is Na(+)(in) = Na(+)(out). It catalyses the reaction K(+)(in) = K(+)(out). The enzyme catalyses NH4(+)(in) = NH4(+)(out). With respect to regulation, activated by cAMP, and at 10-100 times higher concentrations, also by cGMP. cAMP binding causes a conformation change that leads to the assembly of an active tetramer and channel opening. Binding of cAMP removes a tonic inhibition conferred by cyclic nucleotide-binding domain (CNBD) on channel opening. Channel activity is modulated by intracellular chloride ions and pH; acidic pH shifts the activation to more negative voltages. Inhibited by extracellular cesium ions. Its function is as follows. Hyperpolarization-activated ion channel that is permeable to sodium and potassium ions. Displays lower selectivity for K(+) over Na(+) ions. Contributes to the native pacemaker currents in heart (If) and in neurons (Ih). Can also transport ammonium in the distal nephron. Involved in the initiation of neuropathic pain in sensory neurons. This chain is Potassium/sodium hyperpolarization-activated cyclic nucleotide-gated channel 2, found in Homo sapiens (Human).